The following is a 266-amino-acid chain: Glucosamine-6-phosphate deaminase (266 aa).

Aspartate 72 acts as the Proton acceptor; for enolization step in catalysis. Aspartate 141 acts as the For ring-opening step in catalysis. The active-site Proton acceptor; for ring-opening step is histidine 143. Glutamate 148 functions as the For ring-opening step in the catalytic mechanism.

The protein belongs to the glucosamine/galactosamine-6-phosphate isomerase family. NagB subfamily. Homohexamer.

It carries out the reaction alpha-D-glucosamine 6-phosphate + H2O = beta-D-fructose 6-phosphate + NH4(+). It participates in amino-sugar metabolism; N-acetylneuraminate degradation; D-fructose 6-phosphate from N-acetylneuraminate: step 5/5. Its activity is regulated as follows. Allosterically activated by N-acetylglucosamine 6-phosphate (GlcNAc6P). In terms of biological role, catalyzes the reversible isomerization-deamination of glucosamine 6-phosphate (GlcN6P) to form fructose 6-phosphate (Fru6P) and ammonium ion. The polypeptide is Glucosamine-6-phosphate deaminase (Citrobacter koseri (strain ATCC BAA-895 / CDC 4225-83 / SGSC4696)).